We begin with the raw amino-acid sequence, 431 residues long: Serine--tRNA ligase (431 aa).

Residue 238–240 (TSE) coordinates L-serine. 269–271 (RSE) contacts ATP. E292 is a binding site for L-serine. 356–359 (EISS) lines the ATP pocket. S391 is an L-serine binding site.

The protein belongs to the class-II aminoacyl-tRNA synthetase family. Type-1 seryl-tRNA synthetase subfamily. In terms of assembly, homodimer. The tRNA molecule binds across the dimer.

The protein localises to the cytoplasm. It catalyses the reaction tRNA(Ser) + L-serine + ATP = L-seryl-tRNA(Ser) + AMP + diphosphate + H(+). The enzyme catalyses tRNA(Sec) + L-serine + ATP = L-seryl-tRNA(Sec) + AMP + diphosphate + H(+). The protein operates within aminoacyl-tRNA biosynthesis; selenocysteinyl-tRNA(Sec) biosynthesis; L-seryl-tRNA(Sec) from L-serine and tRNA(Sec): step 1/1. In terms of biological role, catalyzes the attachment of serine to tRNA(Ser). Is also able to aminoacylate tRNA(Sec) with serine, to form the misacylated tRNA L-seryl-tRNA(Sec), which will be further converted into selenocysteinyl-tRNA(Sec). This chain is Serine--tRNA ligase, found in Leptothrix cholodnii (strain ATCC 51168 / LMG 8142 / SP-6) (Leptothrix discophora (strain SP-6)).